The chain runs to 163 residues: Glutathione peroxidase-like peroxiredoxin HYR1 (163 aa).

The active-site Cysteine sulfenic acid (-SOH) intermediate is the Cys-36. A disulfide bond links Cys-36 and Cys-82.

It belongs to the glutathione peroxidase family. As to quaternary structure, interacts with YAP1 and probably YBP1.

Its subcellular location is the cytoplasm. The protein localises to the mitochondrion intermembrane space. It localises to the peroxisome matrix. It carries out the reaction a hydroperoxide + [thioredoxin]-dithiol = an alcohol + [thioredoxin]-disulfide + H2O. Involved in oxidative stress response and redox homeostasis. Functions as a sensor and transducer of hydroperoxide stress. In response to hydroperoxide stress it oxidizes (activates) the transcription activator YAP1, which is involved in transcription activation of genes of the oxidative stress response pathway. May also play a direct role in hydroperoxide scavenging, being the most active of three closely related S.cerevisiae peroxiredoxins (GPX1, GPX2, and HYR1/GPX3) with respect to peroxide and lipid hydroperoxide reduction. The three enzymes are not required for the glutaredoxin-mediated antioxidant function. In the presence of peroxides, HYR1/GPX3 is directly oxidized at Cys-36 to form a cysteine sulfenic acid (-SOH). Cys-36-SOH then forms either an intramolecular disulfide bond (Cys-36 with Cys-82) or a transient, intermolecular disulfide bond with 'Cys-598' of YAP1, which is further resolved into a YAP1 intramolecular disulfide bond ('Cys-303' with 'Cys-598'), which causes its nuclear accumulation and activation, and a reduced Cys-36 in HYR1/GPX3. The sequence is that of Glutathione peroxidase-like peroxiredoxin HYR1 from Saccharomyces cerevisiae (strain ATCC 204508 / S288c) (Baker's yeast).